Reading from the N-terminus, the 71-residue chain is MIIAIVAVVIFLLNFLTPYGYMPMMGYGGGMMGYSDERYYPPGCCQGPAESSSNGGSMITKPSTGACQGGR.

The chain crosses the membrane as a helical span at residues 2–24 (IIAIVAVVIFLLNFLTPYGYMPM). Positions 48-71 (PAESSSNGGSMITKPSTGACQGGR) are disordered. Residues 49-71 (AESSSNGGSMITKPSTGACQGGR) show a composition bias toward polar residues.

It localises to the membrane. This is an uncharacterized protein from Archaeoglobus fulgidus (strain ATCC 49558 / DSM 4304 / JCM 9628 / NBRC 100126 / VC-16).